Consider the following 399-residue polypeptide: Phosphoglycerate kinase (399 aa).

Residues 22–24 (DFN), arginine 38, 61–64 (HLGR), arginine 120, and arginine 153 contribute to the substrate site. ATP-binding positions include lysine 204, glutamate 326, and 353–356 (GGDT).

The protein belongs to the phosphoglycerate kinase family. In terms of assembly, monomer.

It is found in the cytoplasm. The enzyme catalyses (2R)-3-phosphoglycerate + ATP = (2R)-3-phospho-glyceroyl phosphate + ADP. It functions in the pathway carbohydrate degradation; glycolysis; pyruvate from D-glyceraldehyde 3-phosphate: step 2/5. The sequence is that of Phosphoglycerate kinase from Geotalea daltonii (strain DSM 22248 / JCM 15807 / FRC-32) (Geobacter daltonii).